Reading from the N-terminus, the 143-residue chain is Sec-independent protein translocase protein TatB (143 aa).

Residues 2–22 form a helical membrane-spanning segment; sequence FGNIGWGEFMVLLVAALVILG. The interval 97-143 is disordered; sequence FDKPGSVSFDKSNPGTKAVSADPSTPTAPQNKPLAAGERPPIDLDAT.

Belongs to the TatB family. As to quaternary structure, the Tat system comprises two distinct complexes: a TatABC complex, containing multiple copies of TatA, TatB and TatC subunits, and a separate TatA complex, containing only TatA subunits. Substrates initially bind to the TatABC complex, which probably triggers association of the separate TatA complex to form the active translocon.

Its subcellular location is the cell membrane. In terms of biological role, part of the twin-arginine translocation (Tat) system that transports large folded proteins containing a characteristic twin-arginine motif in their signal peptide across membranes. Together with TatC, TatB is part of a receptor directly interacting with Tat signal peptides. TatB may form an oligomeric binding site that transiently accommodates folded Tat precursor proteins before their translocation. The protein is Sec-independent protein translocase protein TatB of Rhodococcus opacus (strain B4).